We begin with the raw amino-acid sequence, 339 residues long: DNA-directed RNA polymerase subunit alpha (339 aa).

The tract at residues 1–233 (MVREEITGST…DLFLPFIHTE (233 aa)) is alpha N-terminal domain (alpha-NTD). The alpha C-terminal domain (alpha-CTD) stretch occupies residues 266-339 (GIPLNCIFID…IDLPKNKFSL (74 aa)).

This sequence belongs to the RNA polymerase alpha chain family. As to quaternary structure, in plastids the minimal PEP RNA polymerase catalytic core is composed of four subunits: alpha, beta, beta', and beta''. When a (nuclear-encoded) sigma factor is associated with the core the holoenzyme is formed, which can initiate transcription.

It localises to the plastid. Its subcellular location is the chloroplast. The enzyme catalyses RNA(n) + a ribonucleoside 5'-triphosphate = RNA(n+1) + diphosphate. DNA-dependent RNA polymerase catalyzes the transcription of DNA into RNA using the four ribonucleoside triphosphates as substrates. The protein is DNA-directed RNA polymerase subunit alpha of Saccharum hybrid (Sugarcane).